A 298-amino-acid polypeptide reads, in one-letter code: GTP cyclohydrolase FolE2 (298 aa).

The protein belongs to the GTP cyclohydrolase IV family.

The catalysed reaction is GTP + H2O = 7,8-dihydroneopterin 3'-triphosphate + formate + H(+). It participates in cofactor biosynthesis; 7,8-dihydroneopterin triphosphate biosynthesis; 7,8-dihydroneopterin triphosphate from GTP: step 1/1. In terms of biological role, converts GTP to 7,8-dihydroneopterin triphosphate. This chain is GTP cyclohydrolase FolE2, found in Neisseria meningitidis serogroup C (strain 053442).